A 277-amino-acid polypeptide reads, in one-letter code: Release factor glutamine methyltransferase (277 aa).

Residues 117–121, D140, W168, and N182 contribute to the S-adenosyl-L-methionine site; that span reads GTGCG. 182-185 is a substrate binding site; the sequence is NPPY.

This sequence belongs to the protein N5-glutamine methyltransferase family. PrmC subfamily.

It carries out the reaction L-glutaminyl-[peptide chain release factor] + S-adenosyl-L-methionine = N(5)-methyl-L-glutaminyl-[peptide chain release factor] + S-adenosyl-L-homocysteine + H(+). Its function is as follows. Methylates the class 1 translation termination release factors RF1/PrfA and RF2/PrfB on the glutamine residue of the universally conserved GGQ motif. This Buchnera aphidicola subsp. Acyrthosiphon pisum (strain APS) (Acyrthosiphon pisum symbiotic bacterium) protein is Release factor glutamine methyltransferase.